The primary structure comprises 246 residues: Mediator of RNA polymerase II transcription subunit 6 (246 aa).

2 disordered regions span residues M165–N186 and E207–K246. 2 stretches are compositionally biased toward basic and acidic residues: residues K166–S184 and A208–E224.

The protein belongs to the Mediator complex subunit 6 family. As to quaternary structure, component of the Mediator complex. Interacts with let-19/mdt-13. Interacts with RNA polymerase II. Interacts with mdt-28.

The protein resides in the nucleus. Functionally, component of the Mediator complex, a coactivator involved in the regulated transcription of nearly all RNA polymerase II-dependent genes. Mediator functions as a bridge to convey information from gene-specific regulatory proteins to the basal RNA polymerase II transcription machinery. Mediator is recruited to promoters by direct interactions with regulatory proteins and serves as a scaffold for the assembly of a functional preinitiation complex with RNA polymerase II and the general transcription factors. This chain is Mediator of RNA polymerase II transcription subunit 6 (mdt-6), found in Caenorhabditis briggsae.